The following is a 230-amino-acid chain: uncharacterized protein (230 aa).

This is an uncharacterized protein from Encephalitozoon cuniculi (strain GB-M1) (Microsporidian parasite).